The primary structure comprises 587 residues: Sorting nexin 2A (587 aa).

Disordered stretches follow at residues 1 to 78 (MMGS…DSDP) and 115 to 151 (SPFD…SSSD). 2 stretches are compositionally biased toward polar residues: residues 42-59 (NGDT…TLSN) and 123-134 (SEINGTEDNSLH). Over residues 135-150 (SQFSDSLSRSPSSSSS) the composition is skewed to low complexity. Ser144 bears the Phosphoserine mark. The region spanning 157-277 (VSNPQKEQEI…KVFLQVQGKL (121 aa)) is the PX domain. A 1,2-diacyl-sn-glycero-3-phospho-(1D-myo-inositol-3-phosphate)-binding residues include Arg201, Lys227, and Arg244. A BAR domain is found at 331–586 (LRQSVSNDWG…TSQYDREKQS (256 aa)).

It belongs to the sorting nexin family. As to quaternary structure, homodimer. Heterodimer with SNX1 or SNX2A. Component of the retromer complex which consists of VPS29 (MAG1), VPS26 (VPS26A or VPS26B), VPS35 (VPS35A or VPS35B or VPS35C), VPS5/17 (SNX1 or SNX2A or SNX2B). As to expression, ubiquitously expressed but at a lower level in flowers, siliques, and senescing leaves.

Its subcellular location is the cytoplasm. The protein resides in the endosome membrane. It localises to the prevacuolar compartment membrane. It is found in the golgi apparatus. The protein localises to the trans-Golgi network membrane. In terms of biological role, plays a role in vesicular protein sorting. Acts at the crossroads between the secretory and endocytic pathways. Is involved in the endosome to vacuole protein transport and, as component of the membrane-associated retromer complex, is also involved in endosome-to-Golgi retrograde transport. Also involved in the efficient sorting of seed storage protein globulin 12S. The protein is Sorting nexin 2A (SNX2A) of Arabidopsis thaliana (Mouse-ear cress).